The sequence spans 288 residues: Chitinase 5 (288 aa).

Positions 1–29 (MANSPTPTMLAFLALGLALLLSATGQASA) are cleaved as a signal peptide. One can recognise a Chitin-binding type-1 domain in the interval 30 to 64 (QNCGCQSNMCCSKWGYCGTGKDYCGDGCRSGPCYG). 7 cysteine pairs are disulfide-bonded: Cys32/Cys40, Cys34/Cys46, Cys39/Cys53, Cys57/Cys62, Cys107/Cys156, Cys169/Cys178, and Cys256/Cys288. Glu151 acts as the Proton donor in catalysis.

The protein belongs to the glycosyl hydrolase 19 family. Chitinase class IV subfamily. In terms of tissue distribution, expressed in sheaths and meristems and at lower levels in roots and leaves.

The enzyme catalyses Random endo-hydrolysis of N-acetyl-beta-D-glucosaminide (1-&gt;4)-beta-linkages in chitin and chitodextrins.. Its function is as follows. May function in reproductive organs during embryogenesis and seed maturation. In Oryza sativa subsp. japonica (Rice), this protein is Chitinase 5 (Cht5).